The chain runs to 439 residues: Ribosomal protein uS12 methylthiotransferase RimO (439 aa).

Positions 2 to 114 (SKLYLMSLGC…VDEMILKKTN (113 aa)) constitute an MTTase N-terminal domain. [4Fe-4S] cluster is bound by residues C11, C45, C77, C146, C150, and C153. One can recognise a Radical SAM core domain in the interval 132-363 (TGSNSHAFIK…VNEVIEKSFE (232 aa)).

The protein belongs to the methylthiotransferase family. RimO subfamily. Requires [4Fe-4S] cluster as cofactor.

It is found in the cytoplasm. It catalyses the reaction L-aspartate(89)-[ribosomal protein uS12]-hydrogen + (sulfur carrier)-SH + AH2 + 2 S-adenosyl-L-methionine = 3-methylsulfanyl-L-aspartate(89)-[ribosomal protein uS12]-hydrogen + (sulfur carrier)-H + 5'-deoxyadenosine + L-methionine + A + S-adenosyl-L-homocysteine + 2 H(+). Catalyzes the methylthiolation of an aspartic acid residue of ribosomal protein uS12. This is Ribosomal protein uS12 methylthiotransferase RimO from Campylobacter jejuni (strain RM1221).